The chain runs to 1464 residues: MGARNSVLRGKKADELEKIRLRPSGKKKYRLKHIVWAANELDKFGLAESLLESKEGCQKILTVLDPLVPTGSENLKSLFNTVCVIWCLHAEEKVKDTEEAKKLVQRHLGAETGTAEKMPSTSRPTAPPSGRGRNFPVQQTGGGNYIHVPLSPRTLNAWVKLVEDKKFGAEVVPGFQALSEGCTPYDINQMLNCVGDHQAAMQIIREIINDEAADWDAQHPIPGPLPAGQLRDPRGSDIAGTTSTVEEQIQWMYRPQNPVPVGNIYRRWIQIGLQKCVRMYNPTNILDVKQGPKEPFQSYVDRFYKSLRAEQTDPAVKNWMTQTLLIQNANPDCKLVLKGLGMNPTLEEMLTACQGVGGPGQKARLMAEALKEALTPPPIPFAAAQQRKVIRCWNCGKEGHSARQCRAPRRQGCWKCGKTGHVMAKCPERQAGFLRDGSMGKEAPQLPRGPSSSGADTNSTPSRSSSGSIGKIYAAGERAEGAEGETIQRGDGRLTAPRAGKSTSQRGDRGLAAPQFSLWKRPVVTAYIEVQPVEVLLDTGADDSIVAGIQLGDNYVPKIVGGIGGFINTKEIKNIEIKVLNKRVRATIMTGDTPINIFGRNILTALGMSLNLPIAKIEPIKVTLKPGKDGPRLRQWPLTKEKIEALREICEKMEKEGQLEEAPPTNPYNTPTFAIKKKDKNKWRMLIDFRELNRVTQDFTEIQLGIPHPAGLAKKKRITVLDVGDAYFSIPLHEDFRQYTAFTLPSVNNAEPGKRYIYKVLPQGWKGSPAIFQHTMRQVLEPFRKANPDVILIQYMDDILIASDRTGLEHDKVVLQLKELLNGLGFSTPDEKFQKDPPLQWMGYELWPTKWKLQKLQLPQKEIWTVNDIQKLVGVLNWAAQIYPGIKTKHLCRLIKGKMTLTEEVQWTELAEAELEENKIILSQEQEGYYYQEEKELEATIQKNQDNQWTYKIHQEEKILKVGKYAKIKNTHTNGVRLLAQVVQKIGKEALVIWGRIPKFHLPVERETWEQWWDNYWQVTWIPEWDFVSTPPLVRLTFNLVGDPIPGAETFYTDGSCNRQSKEGKARYVTDRGRDKVRVLERTTNQQAELEAFAMTLTDSGPKVNIIVDSQYVMGIVVGQPTESESRIVNQIIEDMIKKEAVYVAWVPAHKGIGGNQEVDHLVSQGIRQVLFLERIEPAQEEHEKYHSNMKELTHKFGIPQLVARQIVNTCAQCQQKGEAIHGQVNAEIGVWQMDCTHLEGKIIIVAVHVASGFIEAEVIPQESGRQTALFLLKLASRWPITHLHTDNGSNFTSQEVKMVAWWIGIEQSFGVPYNPQSQGVVEAMNHHLKNQISRIREQANTIETIVLMAVHCMNFKRRGGIGDMTPAERLINMITTEQEIQFLQRKNSNFKNFQVYYREGRDQLWKGPGELLWKGDGAVIVKVGADIKVIPRRKAKIIRDYGGRQELDSSHLEGAREEDGEVA.

The N-myristoyl glycine; by host moiety is linked to residue glycine 2. The segment at 7–31 (VLRGKKADELEKIRLRPSGKKKYRL) is interaction with Gp41. The short motif at 16–22 (LEKIRLR) is the Nuclear export signal element. The Nuclear localization signal signature appears at 26-32 (KKKYRLK). The interval 108–146 (LGAETGTAEKMPSTSRPTAPPSGRGRNFPVQQTGGGNYI) is disordered. Residues 192–229 (NCVGDHQAAMQIIREIINDEAADWDAQHPIPGPLPAGQ) are interaction with human PPIA/CYPA and NUP153. The segment at 280-366 (YNPTNILDVK…GGPGQKARLM (87 aa)) is dimerization/Multimerization of capsid protein p24. 2 CCHC-type zinc fingers span residues 390-407 (IRCW…QCRA) and 411-428 (QGCW…KCPE). Positions 434 to 509 (LRDGSMGKEA…GKSTSQRGDR (76 aa)) are disordered. Residues 459-468 (STPSRSSSGS) show a composition bias toward low complexity. Positions 477–492 (ERAEGAEGETIQRGDG) are enriched in basic and acidic residues. Positions 514–518 (PQFSL) are dimerization of protease. Positions 533-602 (VEVLLDTGAD…TPINIFGRNI (70 aa)) constitute a Peptidase A2 domain. Residue aspartate 538 is the For protease activity; shared with dimeric partner of the active site. Dimerization of protease regions lie at residues 562–568 (GIGGFIN) and 601–613 (NILT…LNLP). Positions 656 to 846 (EGQLEEAPPT…PPLQWMGYEL (191 aa)) constitute a Reverse transcriptase domain. Mg(2+) contacts are provided by aspartate 722, aspartate 797, and aspartate 798. Residues 839-847 (LQWMGYELW) are RT 'primer grip'. A Tryptophan repeat motif motif is present at residues 1009–1025 (WEQWWDNYWQVTWIPEW). An RNase H type-1 domain is found at 1045-1168 (IPGAETFYTD…VDHLVSQGIR (124 aa)). The Mg(2+) site is built by aspartate 1054, glutamate 1089, aspartate 1109, and aspartate 1160. Residues 1174-1215 (ERIEPAQEEHEKYHSNMKELTHKFGIPQLVARQIVNTCAQCQ) form an Integrase-type zinc finger. Residues histidine 1183, histidine 1187, cysteine 1211, and cysteine 1214 each coordinate Zn(2+). In terms of domain architecture, Integrase catalytic spans 1224 to 1375 (QVNAEIGVWQ…TPAERLINMI (152 aa)). Positions 1235, 1287, and 1323 each coordinate Mg(2+). Positions 1394–1441 (FQVYYREGRDQLWKGPGELLWKGDGAVIVKVGADIKVIPRRKAKIIRD) form a DNA-binding region, integrase-type.

In terms of assembly, homotrimer; further assembles as hexamers of trimers. Interacts with gp41 (via C-terminus). Interacts with host CALM1; this interaction induces a conformational change in the Matrix protein, triggering exposure of the myristate group. Interacts with host AP3D1; this interaction allows the polyprotein trafficking to multivesicular bodies during virus assembly. Part of the pre-integration complex (PIC) which is composed of viral genome, matrix protein, Vpr and integrase. Homodimer; the homodimer further multimerizes as homohexamers or homopentamers. Interacts with human PPIA/CYPA. Interacts with human NUP153. Interacts with host PDZD8; this interaction stabilizes the capsid. Interacts with monkey TRIM5; this interaction destabilizes the capsid. As to quaternary structure, homodimer, whose active site consists of two apposed aspartic acid residues. In terms of assembly, heterodimer of p66 RT and p51 RT (RT p66/p51). Heterodimerization of RT is essential for DNA polymerase activity. The overall folding of the subdomains is similar in p66 RT and p51 RT but the spatial arrangements of the subdomains are dramatically different. Homotetramer; may further associate as a homohexadecamer. Part of the pre-integration complex (PIC) which is composed of viral genome, matrix protein, Vpr and integrase. Interacts with human SMARCB1/INI1 and human PSIP1/LEDGF isoform 1. Interacts with human KPNA3; this interaction might play a role in nuclear import of the pre-integration complex. Interacts with human NUP153; this interaction might play a role in nuclear import of the pre-integration complex. Mg(2+) is required as a cofactor. Specific enzymatic cleavages by the viral protease yield mature proteins. The protease is released by autocatalytic cleavage. The polyprotein is cleaved during and after budding, this process is termed maturation. Proteolytic cleavage of p66 RT removes the RNase H domain to yield the p51 RT subunit. Nucleocapsid protein p7 might be further cleaved after virus entry.

Its subcellular location is the host cell membrane. The protein localises to the host endosome. It localises to the host multivesicular body. It is found in the virion membrane. The protein resides in the host nucleus. Its subcellular location is the host cytoplasm. The protein localises to the virion. It carries out the reaction Endopeptidase for which the P1 residue is preferably hydrophobic.. The catalysed reaction is Endohydrolysis of RNA in RNA/DNA hybrids. Three different cleavage modes: 1. sequence-specific internal cleavage of RNA. Human immunodeficiency virus type 1 and Moloney murine leukemia virus enzymes prefer to cleave the RNA strand one nucleotide away from the RNA-DNA junction. 2. RNA 5'-end directed cleavage 13-19 nucleotides from the RNA end. 3. DNA 3'-end directed cleavage 15-20 nucleotides away from the primer terminus.. The enzyme catalyses 3'-end directed exonucleolytic cleavage of viral RNA-DNA hybrid.. It catalyses the reaction DNA(n) + a 2'-deoxyribonucleoside 5'-triphosphate = DNA(n+1) + diphosphate. Protease: The viral protease is inhibited by many synthetic protease inhibitors (PIs), such as amprenavir, atazanavir, indinavir, loprinavir, nelfinavir, ritonavir and saquinavir. Use of protease inhibitors in tritherapy regimens permit more ambitious therapeutic strategies. Reverse transcriptase/ribonuclease H: RT can be inhibited either by nucleoside RT inhibitors (NRTIs) or by non nucleoside RT inhibitors (NNRTIs). NRTIs act as chain terminators, whereas NNRTIs inhibit DNA polymerization by binding a small hydrophobic pocket near the RT active site and inducing an allosteric change in this region. Classical NRTIs are abacavir, adefovir (PMEA), didanosine (ddI), lamivudine (3TC), stavudine (d4T), tenofovir (PMPA), zalcitabine (ddC), and zidovudine (AZT). Classical NNRTIs are atevirdine (BHAP U-87201E), delavirdine, efavirenz (DMP-266), emivirine (I-EBU), and nevirapine (BI-RG-587). The tritherapies used as a basic effective treatment of AIDS associate two NRTIs and one NNRTI. Mediates, with Gag polyprotein, the essential events in virion assembly, including binding the plasma membrane, making the protein-protein interactions necessary to create spherical particles, recruiting the viral Env proteins, and packaging the genomic RNA via direct interactions with the RNA packaging sequence (Psi). Gag-Pol polyprotein may regulate its own translation, by the binding genomic RNA in the 5'-UTR. At low concentration, the polyprotein would promote translation, whereas at high concentration, the polyprotein would encapsidate genomic RNA and then shut off translation. In terms of biological role, targets the polyprotein to the plasma membrane via a multipartite membrane-binding signal, that includes its myristoylated N-terminus. Matrix protein is part of the pre-integration complex. Implicated in the release from host cell mediated by Vpu. Binds to RNA. Its function is as follows. Forms the conical core that encapsulates the genomic RNA-nucleocapsid complex in the virion. Most core are conical, with only 7% tubular. The core is constituted by capsid protein hexamer subunits. The core is disassembled soon after virion entry. Host restriction factors such as TRIM5-alpha or TRIMCyp bind retroviral capsids and cause premature capsid disassembly, leading to blocks in reverse transcription. Capsid restriction by TRIM5 is one of the factors which restricts HIV-1 to the human species. Host PIN1 apparently facilitates the virion uncoating. On the other hand, interactions with PDZD8 or CYPA stabilize the capsid. Functionally, encapsulates and protects viral dimeric unspliced genomic RNA (gRNA). Binds these RNAs through its zinc fingers. Acts as a nucleic acid chaperone which is involved in rearangement of nucleic acid secondary structure during gRNA retrotranscription. Also facilitates template switch leading to recombination. As part of the polyprotein, participates in gRNA dimerization, packaging, tRNA incorporation and virion assembly. Aspartyl protease that mediates proteolytic cleavages of Gag and Gag-Pol polyproteins during or shortly after the release of the virion from the plasma membrane. Cleavages take place as an ordered, step-wise cascade to yield mature proteins. This process is called maturation. Displays maximal activity during the budding process just prior to particle release from the cell. Also cleaves Nef and Vif, probably concomitantly with viral structural proteins on maturation of virus particles. Hydrolyzes host EIF4GI and PABP1 in order to shut off the capped cellular mRNA translation. The resulting inhibition of cellular protein synthesis serves to ensure maximal viral gene expression and to evade host immune response. In terms of biological role, multifunctional enzyme that converts the viral RNA genome into dsDNA in the cytoplasm, shortly after virus entry into the cell. This enzyme displays a DNA polymerase activity that can copy either DNA or RNA templates, and a ribonuclease H (RNase H) activity that cleaves the RNA strand of RNA-DNA heteroduplexes in a partially processive 3' to 5' endonucleasic mode. Conversion of viral genomic RNA into dsDNA requires many steps. A tRNA(3)-Lys binds to the primer-binding site (PBS) situated at the 5'-end of the viral RNA. RT uses the 3' end of the tRNA primer to perform a short round of RNA-dependent minus-strand DNA synthesis. The reading proceeds through the U5 region and ends after the repeated (R) region which is present at both ends of viral RNA. The portion of the RNA-DNA heteroduplex is digested by the RNase H, resulting in a ssDNA product attached to the tRNA primer. This ssDNA/tRNA hybridizes with the identical R region situated at the 3' end of viral RNA. This template exchange, known as minus-strand DNA strong stop transfer, can be either intra- or intermolecular. RT uses the 3' end of this newly synthesized short ssDNA to perform the RNA-dependent minus-strand DNA synthesis of the whole template. RNase H digests the RNA template except for two polypurine tracts (PPTs) situated at the 5'-end and near the center of the genome. It is not clear if both polymerase and RNase H activities are simultaneous. RNase H probably can proceed both in a polymerase-dependent (RNA cut into small fragments by the same RT performing DNA synthesis) and a polymerase-independent mode (cleavage of remaining RNA fragments by free RTs). Secondly, RT performs DNA-directed plus-strand DNA synthesis using the PPTs that have not been removed by RNase H as primers. PPTs and tRNA primers are then removed by RNase H. The 3' and 5' ssDNA PBS regions hybridize to form a circular dsDNA intermediate. Strand displacement synthesis by RT to the PBS and PPT ends produces a blunt ended, linear dsDNA copy of the viral genome that includes long terminal repeats (LTRs) at both ends. Its function is as follows. Catalyzes viral DNA integration into the host chromosome, by performing a series of DNA cutting and joining reactions. This enzyme activity takes place after virion entry into a cell and reverse transcription of the RNA genome in dsDNA. The first step in the integration process is 3' processing. This step requires a complex comprising the viral genome, matrix protein, Vpr and integrase. This complex is called the pre-integration complex (PIC). The integrase protein removes 2 nucleotides from each 3' end of the viral DNA, leaving recessed CA OH's at the 3' ends. In the second step, the PIC enters cell nucleus. This process is mediated through integrase and Vpr proteins, and allows the virus to infect a non dividing cell. This ability to enter the nucleus is specific of lentiviruses, other retroviruses cannot and rely on cell division to access cell chromosomes. In the third step, termed strand transfer, the integrase protein joins the previously processed 3' ends to the 5' ends of strands of target cellular DNA at the site of integration. The 5'-ends are produced by integrase-catalyzed staggered cuts, 5 bp apart. A Y-shaped, gapped, recombination intermediate results, with the 5'-ends of the viral DNA strands and the 3' ends of target DNA strands remaining unjoined, flanking a gap of 5 bp. The last step is viral DNA integration into host chromosome. This involves host DNA repair synthesis in which the 5 bp gaps between the unjoined strands are filled in and then ligated. Since this process occurs at both cuts flanking the HIV genome, a 5 bp duplication of host DNA is produced at the ends of HIV-1 integration. Alternatively, Integrase may catalyze the excision of viral DNA just after strand transfer, this is termed disintegration. This Homo sapiens (Human) protein is Gag-Pol polyprotein (gag-pol).